The primary structure comprises 248 residues: Protein G1-like6 (248 aa).

Residues 1-15 show a composition bias toward basic residues; it reads MDRHHHHHHHHHHHM. 3 disordered regions span residues 1–35, 50–84, and 198–248; these read MDRHHHHHHHHHHHMMSGGGQDPAAGDGGAGGATQ, GAGSSSSGAGTSAGGGGGGPSPSSSSPSLSRYESQ, and ARGI…FIIP. Positions 17-32 are enriched in gly residues; the sequence is SGGGQDPAAGDGGAGG. The segment covering 50-59 has biased composition (low complexity); it reads GAGSSSSGAG. Over residues 60 to 69 the composition is skewed to gly residues; sequence TSAGGGGGGP. Over residues 70–79 the composition is skewed to low complexity; sequence SPSSSSPSLS. Residues 80-207 enclose the ALOG domain; that stretch reads RYESQKRRDW…ARGISYEKKK (128 aa). The Nuclear localization signal motif lies at 205–209; the sequence is KKKRK. 2 stretches are compositionally biased toward low complexity: residues 212 to 224 and 239 to 248; these read SSAGAGAGPSSEG and TSASPQFIIP.

This sequence belongs to the plant homeotic and developmental regulators ALOG protein family.

It localises to the nucleus. Its function is as follows. Probable transcription regulator that acts as a developmental regulator by promoting cell growth in response to light. This is Protein G1-like6 from Oryza sativa subsp. indica (Rice).